The primary structure comprises 138 residues: Large ribosomal subunit protein uL16 (138 aa).

A compositionally biased stretch (basic residues) spans 1 to 16; that stretch reads MLIPRRVKHRKQHHPS. A disordered region spans residues 1–25; it reads MLIPRRVKHRKQHHPSRSGAAKGGT.

The protein belongs to the universal ribosomal protein uL16 family. Part of the 50S ribosomal subunit.

Binds 23S rRNA and is also seen to make contacts with the A and possibly P site tRNAs. The polypeptide is Large ribosomal subunit protein uL16 (Rhodococcus erythropolis (strain PR4 / NBRC 100887)).